The chain runs to 253 residues: 5'/3'-nucleotidase SurE (253 aa).

Positions 8, 9, 39, and 92 each coordinate a divalent metal cation.

It belongs to the SurE nucleotidase family. The cofactor is a divalent metal cation.

It localises to the cytoplasm. The catalysed reaction is a ribonucleoside 5'-phosphate + H2O = a ribonucleoside + phosphate. It catalyses the reaction a ribonucleoside 3'-phosphate + H2O = a ribonucleoside + phosphate. The enzyme catalyses [phosphate](n) + H2O = [phosphate](n-1) + phosphate + H(+). In terms of biological role, nucleotidase with a broad substrate specificity as it can dephosphorylate various ribo- and deoxyribonucleoside 5'-monophosphates and ribonucleoside 3'-monophosphates with highest affinity to 3'-AMP. Also hydrolyzes polyphosphate (exopolyphosphatase activity) with the preference for short-chain-length substrates (P20-25). Might be involved in the regulation of dNTP and NTP pools, and in the turnover of 3'-mononucleotides produced by numerous intracellular RNases (T1, T2, and F) during the degradation of various RNAs. The polypeptide is 5'/3'-nucleotidase SurE (Serratia proteamaculans (strain 568)).